Reading from the N-terminus, the 249-residue chain is Small ribosomal subunit protein eS6 (249 aa).

Residue K14 forms a Glycyl lysine isopeptide (Lys-Gly) (interchain with G-Cter in SUMO2) linkage. ADP-ribosyl glutamic acid is present on E35. R137 carries the (3R)-3-hydroxyarginine modification. Phosphoserine is present on S148. At K211 the chain carries N6-acetyllysine. Over residues 217-229 (MKEAKEKRQEQIA) the composition is skewed to basic and acidic residues. Positions 217-249 (MKEAKEKRQEQIAKRRRLSSLRASTSKSESSQK) are disordered. 2 positions are modified to phosphoserine; by RPS6KA1, RPS6KA3, DAPK1 and PASK: S235 and S236. The span at 236–249 (SLRASTSKSESSQK) shows a compositional bias: low complexity. Phosphoserine occurs at positions 240, 242, 244, and 247.

It belongs to the eukaryotic ribosomal protein eS6 family. In terms of assembly, component of the small ribosomal subunit. Part of the small subunit (SSU) processome, composed of more than 70 proteins and the RNA chaperone small nucleolar RNA (snoRNA) U3. Ribosomal protein S6 is the major substrate of protein kinases in eukaryote ribosomes. The phosphorylation is stimulated by growth factors, tumor promoting agents, and mitogens. It is dephosphorylated at growth arrest. Phosphorylated at Ser-235 and Ser-236 by RPS6KA1 and RPS6KA3; phosphorylation at these sites facilitates the assembly of the pre-initiation complex. Post-translationally, specifically hydroxylated (with R stereochemistry) at C-3 of Arg-137 by KDM8. In terms of processing, mono-ADP-ribosylation at Glu-35 by PARP16 inhibits polysome assembly and mRNA loading, thereby inhibiting protein translation.

It localises to the cytoplasm. It is found in the nucleus. The protein resides in the nucleolus. Its function is as follows. Component of the 40S small ribosomal subunit. Plays an important role in controlling cell growth and proliferation through the selective translation of particular classes of mRNA. Part of the small subunit (SSU) processome, first precursor of the small eukaryotic ribosomal subunit. During the assembly of the SSU processome in the nucleolus, many ribosome biogenesis factors, an RNA chaperone and ribosomal proteins associate with the nascent pre-rRNA and work in concert to generate RNA folding, modifications, rearrangements and cleavage as well as targeted degradation of pre-ribosomal RNA by the RNA exosome. In Bos taurus (Bovine), this protein is Small ribosomal subunit protein eS6 (RPS6).